A 64-amino-acid chain; its full sequence is Large ribosomal subunit protein bL35 (64 aa).

Belongs to the bacterial ribosomal protein bL35 family.

This Chlorobium limicola (strain DSM 245 / NBRC 103803 / 6330) protein is Large ribosomal subunit protein bL35.